The sequence spans 438 residues: Battenin (438 aa).

The disordered stretch occupies residues 1-29; that stretch reads MGGCAGSRRRLLDSEEEETAPEPRPPRSY. Over 1–37 the chain is Cytoplasmic; that stretch reads MGGCAGSRRRLLDSEEEETAPEPRPPRSYHKGALWKN. Phosphoserine is present on Ser14. The helical transmembrane segment at 38-58 threads the bilayer; that stretch reads VMGFWLLGLCNNFSYVVMLSA. The Lumenal portion of the chain corresponds to 59 to 127; it reads AHDILSHQRA…GLHLLPYSPR (69 aa). The interval 68-89 is disordered; it reads ASGNQSHVDPDPPPTAHNSSSR. Residues Asn71 and Asn85 are each glycosylated (N-linked (GlcNAc...) asparagine). A helical membrane pass occupies residues 128 to 148; sequence VLVSGICAAGSFILVAFSHSV. Residues 149-151 lie on the Cytoplasmic side of the membrane; the sequence is GTS. The chain crosses the membrane as a helical span at residues 152–172; it reads LCGVVLASISSGVGEVTFLSL. The Lumenal segment spans residues 173-182; it reads TAFYPRAVIS. Residues 183–203 form a helical membrane-spanning segment; sequence WWSSGTGGAGLMGALSYLGLT. At 204-277 the chain is on the cytoplasmic side; that stretch reads QAGLSPQHTL…NLSLQERWTV (74 aa). The segment at 236-267 is disordered; the sequence is PQDPGGEEEAETSARQPLIDSETPESKPDSSS. Positions 242 to 244 match the Lysosomal targeting motif motif; it reads EEE. Positions 253 to 254 match the Lysosomal targeting motif. Required for AP1G1, AP2A2 and AP3D1 interaction motif; the sequence is LI. A helical membrane pass occupies residues 278 to 298; that stretch reads FKGLLWYIVPLVLVYFAEYFI. The Lumenal portion of the chain corresponds to 299–346; that stretch reads NQGLFELLFFRNTSLNHAQQYRWYQMLYQAGVFVSRSSLHCCRIRFTW. N-linked (GlcNAc...) asparagine glycosylation is present at Asn310. Residues 347 to 367 traverse the membrane as a helical segment; it reads VLALLQCLNLAFLLVDVWFSF. Residues 368–438 are Cytoplasmic-facing; sequence LPSIYLVFLI…PLHDFLCHLS (71 aa). The short motif at 409–419 is the Lysosomal targeting motif element; that stretch reads MAAACISDTLG. Cys435 carries the post-translational modification Cysteine methyl ester. Cys435 carries S-farnesyl cysteine lipidation. Positions 436–438 are cleaved as a propeptide — removed in mature form; sequence HLS.

The protein belongs to the battenin family. Interacts with DCTN1, KIF3A, RAB7A and RILP. Interacts with CLN5. In terms of processing, highly glycosylated. Post-translationally, farnesylation is important for trafficking to lysosomes.

It is found in the lysosome membrane. It localises to the late endosome. Its subcellular location is the lysosome. Mediates microtubule-dependent, anterograde transport connecting the Golgi network, endosomes, autophagosomes, lysosomes and plasma membrane, and participates in several cellular processes such as regulation of lysosomal pH, lysosome protein degradation, receptor-mediated endocytosis, autophagy, transport of proteins and lipids from the TGN, apoptosis and synaptic transmission. Facilitates the proteins transport from trans-Golgi network (TGN)-to other membrane compartments such as transport of microdomain-associated proteins to the plasma membrane, IGF2R transport to the lysosome where it regulates the CTSD release leading to regulation of CTSD maturation and thereby APP intracellular processing. Moreover regulates CTSD activity in response to osmotic stress. Also binds galactosylceramide and transports it from the trans Golgi to the rafts, which may have immediate and downstream effects on cell survival by modulating ceramide synthesis. At the plasma membrane, regulates actin-dependent events including filopodia formation, cell migration, and pinocytosis through ARF1-CDC42 pathway and also the cytoskeleton organization through interaction with MYH10 and fodrin leading to the regulation of the plasma membrane association of Na+, K+ ATPase complex. Regulates synaptic transmission in the amygdala, hippocampus, and cerebellum through regulation of synaptic vesicles density and their proximity to active zones leading to modulation of short-term plasticity and age-dependent anxious behavior, learning and memory. Regulates autophagic vacuoles (AVs) maturation by modulating the trafficking between endocytic and autophagolysosomal/lysosomal compartments, which involves vesicle fusion leading to regulation of degradation process. Also participates in cellular homeostasis of compounds such as, water, ions, amino acids, proteins and lipids in several tissue namely in brain and kidney through regulation of their transport and synthesis. This chain is Battenin, found in Canis lupus familiaris (Dog).